The chain runs to 350 residues: Cilia- and flagella-associated protein 36 (350 aa).

Residues 142–167 (SELEQQEMKILQEVLRRSKEEYDLQM) adopt a coiled-coil conformation. Disordered regions lie at residues 171–233 (GLGS…ATTA) and 301–337 (RQTG…QKRK). Positions 177 to 220 (LASTSSSVSETPQNPEQRLSNGVSDPLTLTQPDSEMEESSTATQ) are enriched in polar residues. Positions 280-350 (VALQQRSEYL…EKLKEEVIKK (71 aa)) form a coiled coil.

Belongs to the CFAP36 family.

It is found in the nucleus. The protein localises to the cytoplasm. Its subcellular location is the cell projection. The protein resides in the cilium. It localises to the flagellum. This is Cilia- and flagella-associated protein 36 from Danio rerio (Zebrafish).